A 372-amino-acid polypeptide reads, in one-letter code: N-methyl-L-tryptophan oxidase (372 aa).

4–34 (DLIIIGSGSVGAAAGYYATRAGLKVLMTDAH) is a binding site for FAD. Cysteine 307 carries the post-translational modification S-8alpha-FAD cysteine.

The protein belongs to the MSOX/MTOX family. MTOX subfamily. Monomer. It depends on FAD as a cofactor.

The catalysed reaction is N(alpha)-methyl-L-tryptophan + O2 + H2O = L-tryptophan + formaldehyde + H2O2. Catalyzes the oxidative demethylation of N-methyl-L-tryptophan. The sequence is that of N-methyl-L-tryptophan oxidase from Salmonella newport (strain SL254).